We begin with the raw amino-acid sequence, 908 residues long: Metabotropic glutamate receptor 8 (908 aa).

The signal sequence occupies residues 1–33 (MVCEGKRSASCPCFFLLTAKFYWILTMMQRTHS). Topologically, residues 34–583 (QEYAHSIRVD…IIKLEWHSPW (550 aa)) are extracellular. A disulfide bridge connects residues C64 and C106. A glycan (N-linked (GlcNAc...) asparagine) is linked at N95. L-glutamate is bound by residues S156, 177 to 179 (AST), and Y227. 7 disulfide bridges follow: C246–C534, C369–C384, C424–C431, C516–C535, C520–C538, C541–C553, and C556–C569. A glycan (N-linked (GlcNAc...) asparagine) is linked at N298. D309 serves as a coordination point for L-glutamate. L-glutamate is bound at residue K401. N-linked (GlcNAc...) asparagine glycosylation is found at N452 and N480. The N-linked (GlcNAc...) asparagine glycan is linked to N565. A helical transmembrane segment spans residues 584-608 (AVVPVFVAILGIIATTFVIVTFVRY). Residues 609–620 (NDTPIVRASGRE) lie on the Cytoplasmic side of the membrane. Residues 621–641 (LSYVLLTGIFLCYSITFLMIA) form a helical membrane-spanning segment. The Extracellular segment spans residues 642–647 (APDTII). A helical membrane pass occupies residues 648 to 668 (CSFRRVFLGLGMCFSYAALLT). The Cytoplasmic segment spans residues 669–695 (KTNRIHRIFEQGKKSVTAPKFISPASQ). Residues 696–716 (LVITFSLISVQLLGVFVWFVV) form a helical membrane-spanning segment. The Extracellular segment spans residues 717 to 746 (DPPHIIIDYGEQRTLDPEKARGVLKCDISD). Residues 747–768 (LSLICSLGYSILLMVTCTVYAI) traverse the membrane as a helical segment. Topologically, residues 769–781 (KTRGVPETFNEAK) are cytoplasmic. Residues 782-803 (PIGFTMYTTCIIWLAFIPIFFG) traverse the membrane as a helical segment. The Extracellular portion of the chain corresponds to 804-818 (TAQSAEKMYIQTTTL). The chain crosses the membrane as a helical span at residues 819–843 (TVSMSLSASVSLGMLYMPKVYIIIF). At 844–908 (HPEQNVQKRK…TYISYSNHSI (65 aa)) the chain is on the cytoplasmic side. K882 participates in a covalent cross-link: Glycyl lysine isopeptide (Lys-Gly) (interchain with G-Cter in SUMO1).

The protein belongs to the G-protein coupled receptor 3 family. Interacts with PICK1.

Its subcellular location is the cell membrane. In terms of biological role, G-protein coupled receptor for glutamate. Ligand binding causes a conformation change that triggers signaling via guanine nucleotide-binding proteins (G proteins) and modulates the activity of down-stream effectors, such as adenylate cyclase. Signaling inhibits adenylate cyclase activity. The chain is Metabotropic glutamate receptor 8 (GRM8) from Homo sapiens (Human).